The following is a 142-amino-acid chain: MLTHKIIGLDVGSKTVGVAVSDLMGWTAQGLDTLRINEEENELGITKLAEIIKKEDADTVVIGLPKNMNNSIGFRGEASLKYKEELLKILPDINVVMWDERLSTMAAERSLLEADVSRSKRKKVIDKMAAVFILQGYLDSLQ.

Belongs to the YqgF nuclease family.

Its subcellular location is the cytoplasm. Could be a nuclease involved in processing of the 5'-end of pre-16S rRNA. The chain is Putative pre-16S rRNA nuclease from Staphylococcus carnosus (strain TM300).